Reading from the N-terminus, the 351-residue chain is Holliday junction branch migration complex subunit RuvB (351 aa).

Residues 1-186 form a large ATPase domain (RuvB-L) region; the sequence is MDEKIETRLI…FGIVQRLEFY (186 aa). Residues Ile-25, Arg-26, Gly-67, Lys-70, Thr-71, Thr-72, 133–135, Arg-176, Tyr-186, and Arg-223 contribute to the ATP site; that span reads EDF. Thr-71 lines the Mg(2+) pocket. Residues 187 to 257 are small ATPAse domain (RuvB-S); sequence RIPDLIHIVK…IAKEALDLLN (71 aa). The head domain (RuvB-H) stretch occupies residues 260–351; sequence IRGLDVMDRK…ENFDLLGKVE (92 aa). Arg-296, Arg-315, and Arg-320 together coordinate DNA.

The protein belongs to the RuvB family. As to quaternary structure, homohexamer. Forms an RuvA(8)-RuvB(12)-Holliday junction (HJ) complex. HJ DNA is sandwiched between 2 RuvA tetramers; dsDNA enters through RuvA and exits via RuvB. An RuvB hexamer assembles on each DNA strand where it exits the tetramer. Each RuvB hexamer is contacted by two RuvA subunits (via domain III) on 2 adjacent RuvB subunits; this complex drives branch migration. In the full resolvosome a probable DNA-RuvA(4)-RuvB(12)-RuvC(2) complex forms which resolves the HJ.

It is found in the cytoplasm. The enzyme catalyses ATP + H2O = ADP + phosphate + H(+). The RuvA-RuvB-RuvC complex processes Holliday junction (HJ) DNA during genetic recombination and DNA repair, while the RuvA-RuvB complex plays an important role in the rescue of blocked DNA replication forks via replication fork reversal (RFR). RuvA specifically binds to HJ cruciform DNA, conferring on it an open structure. The RuvB hexamer acts as an ATP-dependent pump, pulling dsDNA into and through the RuvAB complex. RuvB forms 2 homohexamers on either side of HJ DNA bound by 1 or 2 RuvA tetramers; 4 subunits per hexamer contact DNA at a time. Coordinated motions by a converter formed by DNA-disengaged RuvB subunits stimulates ATP hydrolysis and nucleotide exchange. Immobilization of the converter enables RuvB to convert the ATP-contained energy into a lever motion, pulling 2 nucleotides of DNA out of the RuvA tetramer per ATP hydrolyzed, thus driving DNA branch migration. The RuvB motors rotate together with the DNA substrate, which together with the progressing nucleotide cycle form the mechanistic basis for DNA recombination by continuous HJ branch migration. Branch migration allows RuvC to scan DNA until it finds its consensus sequence, where it cleaves and resolves cruciform DNA. This chain is Holliday junction branch migration complex subunit RuvB, found in Coxiella burnetii (strain RSA 331 / Henzerling II).